The primary structure comprises 1034 residues: Probable outer membrane protein PmpF (1034 aa).

A signal peptide spans 1-25; it reads MIKRTSLSFACLSFFYLSTISILQA. Composition is skewed to low complexity over residues 664–673 and 680–709; these read SAPTSATSIA and ETFT…ASNS. A disordered region spans residues 664-709; that stretch reads SAPTSATSIAEQKKTSETFTPSNTTTASIPNIKASAGSGSGSASNS. Residues 755-1034 form the Autotransporter domain; that stretch reads RSLLPDNSWF…YINAGGALVF (280 aa).

This sequence belongs to the PMP outer membrane protein family.

The protein localises to the secreted. It localises to the cell wall. It is found in the cell outer membrane. The chain is Probable outer membrane protein PmpF (pmpF) from Chlamydia trachomatis serovar D (strain ATCC VR-885 / DSM 19411 / UW-3/Cx).